The primary structure comprises 131 residues: Probable ATP synthase subunit g 1, mitochondrial (131 aa).

The protein belongs to the ATPase g subunit family. Subunit of the F-type ATPase which has 2 components, CF(1) - the catalytic core - and CF(0) - the membrane proton channel.

The protein resides in the mitochondrion membrane. Mitochondrial membrane ATP synthase (F(1)F(0) ATP synthase or Complex V) produces ATP from ADP in the presence of a proton gradient across the membrane which is generated by electron transport complexes of the respiratory chain. F-type ATPases consist of two structural domains, F(1) - containing the extramembraneous catalytic core, and F(0) - containing the membrane proton channel, linked together by a central stalk and a peripheral stalk. During catalysis, ATP synthesis in the catalytic domain of F(1) is coupled via a rotary mechanism of the central stalk subunits to proton translocation. Part of the complex F(0) domain. Minor subunit located with subunit a in the membrane. The protein is Probable ATP synthase subunit g 1, mitochondrial of Caenorhabditis elegans.